Reading from the N-terminus, the 480-residue chain is MNASEFRRRGKEMVDYVANYLEGIESRLVYPDVEPGYLRPLIPSSAPEEPETYEDIIGDIERIIMPGVTHWNSPYFFAYFPTANSYPSMLADMLCGAISCIGFSWAASPACTELETVMLDWLGKMLRLPDAFLAGNAGMGGGVIQGSASEATLVALLAARTKVIRRLQAASPELTQAAIMEKLVAYASDQAHSSVERAGLIGGVRMKLIPSDSNFAMRASALREALERDKAAGLIPFFVVATLGTTNCCSFDSLLEVGPICNQEEMWLHIDAAYAGSAFICPEFRHLLDGVEFADSFNFNPHKWLLVNFDCSAMWVKQRTDLIGAFKLDPVYLKHGHQDSGLITDYRHWQIPLGRRFRSLKMWFVFRMYGIKGLQAHIRKHVQLAHEFESLVRQDPRFEICMEVTLGLVCFRLKGSNQLNETLLKRINSARKIHLVPCHLRDKFVLRFRICSRQVESDHVQQAWQHIRQLASSVLRLERA.

Methionine 1 carries the post-translational modification N-acetylmethionine. Tandem repeats lie at residues glycine 58–glutamate 115 and methionine 118–alanine 178. A 2 X approximate tandem repeats region spans residues glycine 58–alanine 178. Position 82 (threonine 82) interacts with substrate. Pyridoxal 5'-phosphate is bound by residues alanine 148 and serine 149. Histidine 192 provides a ligand contact to substrate. Threonine 246 and asparagine 300 together coordinate pyridoxal 5'-phosphate. N6-(pyridoxal phosphate)lysine is present on lysine 303.

Belongs to the group II decarboxylase family. As to quaternary structure, homodimer. Pyridoxal 5'-phosphate serves as cofactor.

It catalyses the reaction L-dopa + H(+) = dopamine + CO2. The catalysed reaction is 5-hydroxy-L-tryptophan + H(+) = serotonin + CO2. It participates in catecholamine biosynthesis; dopamine biosynthesis; dopamine from L-tyrosine: step 2/2. In terms of biological role, catalyzes the decarboxylation of L-3,4-dihydroxyphenylalanine (DOPA) to dopamine and L-5-hydroxytryptophan to serotonin. This Cavia porcellus (Guinea pig) protein is Aromatic-L-amino-acid decarboxylase (DDC).